The sequence spans 423 residues: Inactive autotransporter heptosyltransferase BimC (423 aa).

The segment covering methionine 1–alanine 10 has biased composition (polar residues). The tract at residues methionine 1 to proline 49 is disordered. 4 residues coordinate Fe(3+): cysteine 371, cysteine 374, cysteine 390, and cysteine 402.

It belongs to the glycosyltransferase 9 family. As to quaternary structure, homotrimer or homotetramer. Fe(3+) serves as cofactor.

Its subcellular location is the cell inner membrane. The protein localises to the cytoplasm. Iron-binding protein which is required for the asymmetric polar distribution of the autotransporter BimA on the bacterial surface prior to its translocation into bacterial periplasm. Lacks heptosyltransferase activity. The sequence is that of Inactive autotransporter heptosyltransferase BimC from Burkholderia thailandensis (strain ATCC 700388 / DSM 13276 / CCUG 48851 / CIP 106301 / E264).